A 299-amino-acid chain; its full sequence is Pyridoxal 5'-phosphate synthase subunit PdxS (299 aa).

A D-ribose 5-phosphate-binding site is contributed by aspartate 24. The Schiff-base intermediate with D-ribose 5-phosphate role is filled by lysine 81. Glycine 153 is a D-ribose 5-phosphate binding site. Arginine 165 lines the D-glyceraldehyde 3-phosphate pocket. D-ribose 5-phosphate contacts are provided by residues glycine 219 and 240-241; that span reads GS.

Belongs to the PdxS/SNZ family. In terms of assembly, in the presence of PdxT, forms a dodecamer of heterodimers.

The enzyme catalyses aldehydo-D-ribose 5-phosphate + D-glyceraldehyde 3-phosphate + L-glutamine = pyridoxal 5'-phosphate + L-glutamate + phosphate + 3 H2O + H(+). Its pathway is cofactor biosynthesis; pyridoxal 5'-phosphate biosynthesis. In terms of biological role, catalyzes the formation of pyridoxal 5'-phosphate from ribose 5-phosphate (RBP), glyceraldehyde 3-phosphate (G3P) and ammonia. The ammonia is provided by the PdxT subunit. Can also use ribulose 5-phosphate and dihydroxyacetone phosphate as substrates, resulting from enzyme-catalyzed isomerization of RBP and G3P, respectively. The sequence is that of Pyridoxal 5'-phosphate synthase subunit PdxS from Methanococcus maripaludis (strain C6 / ATCC BAA-1332).